The primary structure comprises 474 residues: Synaptotagmin-17 (474 aa).

The interval 60-112 is disordered; the sequence is WLMASRSSDKDGDSVHTASEVPLTPRTNSPDGRRSSSDTSKSTYSLTRRISSL. The span at 96–112 shows a compositional bias: low complexity; that stretch reads SDTSKSTYSLTRRISSL. Phosphoserine occurs at positions 118 and 119. 2 C2 domains span residues 184 to 310 and 321 to 455; these read QLGM…HWWK and ELGE…EQWH.

Belongs to the synaptotagmin family. In terms of tissue distribution, expressed abundantly in brain (frontal and temporal lobes, hippocampus, hypothalamus, amygdala, substantia nigra, and pituitary), kidney, and prostate. Expressed in fetal brain, kidney and lung. Expressed in melanocytes.

Its subcellular location is the membrane. In terms of biological role, plays a role in dendrite formation by melanocytes. This Homo sapiens (Human) protein is Synaptotagmin-17 (SYT17).